The chain runs to 453 residues: 3-phosphoshikimate 1-carboxyvinyltransferase (453 aa).

3-phosphoshikimate-binding residues include lysine 28, serine 29, and arginine 33. Lysine 28 contributes to the phosphoenolpyruvate binding site. The phosphoenolpyruvate site is built by glycine 101 and arginine 129. 4 residues coordinate 3-phosphoshikimate: serine 174, glutamine 176, aspartate 326, and lysine 353. Position 176 (glutamine 176) interacts with phosphoenolpyruvate. Aspartate 326 functions as the Proton acceptor in the catalytic mechanism. Residues arginine 357 and arginine 405 each contribute to the phosphoenolpyruvate site.

Belongs to the EPSP synthase family. In terms of assembly, monomer.

Its subcellular location is the cytoplasm. It carries out the reaction 3-phosphoshikimate + phosphoenolpyruvate = 5-O-(1-carboxyvinyl)-3-phosphoshikimate + phosphate. It functions in the pathway metabolic intermediate biosynthesis; chorismate biosynthesis; chorismate from D-erythrose 4-phosphate and phosphoenolpyruvate: step 6/7. Catalyzes the transfer of the enolpyruvyl moiety of phosphoenolpyruvate (PEP) to the 5-hydroxyl of shikimate-3-phosphate (S3P) to produce enolpyruvyl shikimate-3-phosphate and inorganic phosphate. The sequence is that of 3-phosphoshikimate 1-carboxyvinyltransferase from Zymomonas mobilis subsp. mobilis (strain ATCC 31821 / ZM4 / CP4).